Here is a 201-residue protein sequence, read N- to C-terminus: Basic helix-loop-helix transcription factor scleraxis (201 aa).

2 disordered regions span residues 1–92 (MSFA…NSVN) and 148–177 (AFFH…QPKQ). Gly residues predominate over residues 59-69 (RRAGGGGPGGR). The span at 70-88 (PGREPRQRHTANARERDRT) shows a compositional bias: basic and acidic residues. Residues 75 to 127 (RQRHTANARERDRTNSVNTAFTALRTLIPTEPADRKLSKIETLRLASSYISHL) form the bHLH domain. Residues 157-167 (SPPPPPPPPPA) show a composition bias toward pro residues.

Efficient DNA binding requires dimerization with another bHLH protein. Dimerizes and binds the E-box consensus sequence with E12.

It localises to the nucleus. In terms of biological role, plays an early essential role in mesoderm formation, as well as a later role in formation of somite-derived chondrogenic lineages. In Homo sapiens (Human), this protein is Basic helix-loop-helix transcription factor scleraxis (SCX).